We begin with the raw amino-acid sequence, 98 residues long: NADH-ubiquinone oxidoreductase chain 4L (98 aa).

The next 3 helical transmembrane spans lie at 1-21 (MSLT…GLLM), 29-49 (SLLC…ITIL), and 61-81 (IILL…LVMV).

It belongs to the complex I subunit 4L family. In terms of assembly, core subunit of respiratory chain NADH dehydrogenase (Complex I) which is composed of 45 different subunits.

Its subcellular location is the mitochondrion inner membrane. It carries out the reaction a ubiquinone + NADH + 5 H(+)(in) = a ubiquinol + NAD(+) + 4 H(+)(out). In terms of biological role, core subunit of the mitochondrial membrane respiratory chain NADH dehydrogenase (Complex I) which catalyzes electron transfer from NADH through the respiratory chain, using ubiquinone as an electron acceptor. Part of the enzyme membrane arm which is embedded in the lipid bilayer and involved in proton translocation. This chain is NADH-ubiquinone oxidoreductase chain 4L (MT-ND4L), found in Mystacina tuberculata (New Zealand lesser short-tailed bat).